Here is a 381-residue protein sequence, read N- to C-terminus: Arf-GAP with dual PH domain-containing protein 2 (381 aa).

One can recognise an Arf-GAP domain in the interval 9-131; sequence KRLLELLRAP…FMADGETISL (123 aa). The segment at 25–48 adopts a C4-type zinc-finger fold; that stretch reads CADCGAADPDWASYKLGIFICLNC. PH domains are found at residues 132 to 233 and 255 to 361; these read PGNR…AARL and NYLK…GVLS.

Highly expressed in placenta, spleen, kidney, skeletal muscle and adrenal gland. Weakly expressed in thyroid, liver, heart, lung, small intestine, peripheral blood leukocytes. Not detected in spinal cord, brain, stomach, trachea, colon, lymph node and bone marrow.

The protein resides in the cytoplasm. It localises to the cell membrane. In terms of biological role, GTPase-activating protein for the ADP ribosylation factor family (Potential). Binds phosphatidylinositol 3,4,5-trisphosphate (PtdInsP3) and inositol 1,3,4,5-tetrakisphosphate (InsP4). Possesses a stoichiometry of two binding sites for InsP4 with identical affinity. This is Arf-GAP with dual PH domain-containing protein 2 (ADAP2) from Homo sapiens (Human).